A 769-amino-acid polypeptide reads, in one-letter code: Polyribonucleotide nucleotidyltransferase (769 aa).

Positions 490 and 496 each coordinate Mg(2+). Residues 557-616 form the KH domain; the sequence is PKIDTIMIPVDKIKVVIGKGGEQIDKIIAETGVKIDIDDEGLCSIFSSDQSAIDRAKEII. In terms of domain architecture, S1 motif spans 626 to 694; it reads GEVYEAKVVR…DKGRVDASMR (69 aa). Residues 700 to 734 are compositionally biased toward basic and acidic residues; it reads PEGYVEPERKPRERRDNKDRRNGNGFDRRNNDRNN. The tract at residues 700–769 is disordered; sequence PEGYVEPERK…FPELSTKKPE (70 aa). Low complexity predominate over residues 736–746; that stretch reads NNHNNNSGNHS. Residues 747–769 show a composition bias toward basic and acidic residues; sequence FELRERKSHVDHEFPELSTKKPE.

The protein belongs to the polyribonucleotide nucleotidyltransferase family. It depends on Mg(2+) as a cofactor.

Its subcellular location is the cytoplasm. It catalyses the reaction RNA(n+1) + phosphate = RNA(n) + a ribonucleoside 5'-diphosphate. Involved in mRNA degradation. Catalyzes the phosphorolysis of single-stranded polyribonucleotides processively in the 3'- to 5'-direction. The sequence is that of Polyribonucleotide nucleotidyltransferase from Lactococcus lactis subsp. cremoris (strain SK11).